We begin with the raw amino-acid sequence, 1423 residues long: Protein phosphatase Slingshot homolog 2 (1423 aa).

2 disordered regions span residues 1 to 37 (MALV…PRSI) and 51 to 70 (LPRG…NKHA). Over residues 9-18 (SPTPSTTSSP) the composition is skewed to low complexity. 3 positions are modified to phosphoserine: serine 17, serine 25, and serine 36. The 56-residue stretch at 248-303 (ERTERLIKTKLREIMMQKDLENITSKEIRTELEMQMVCNLREFKEFIDNEMIVILG) folds into the DEK-C domain. The Tyrosine-protein phosphatase domain maps to 307–448 (SPTQIFEHVF…LEEYQGILLA (142 aa)). Residue cysteine 392 is the Phosphocysteine intermediate of the active site. Phosphoserine occurs at positions 461, 487, 534, 631, and 633. Disordered stretches follow at residues 698–725 (EMAA…DEDQ), 833–858 (HSST…MHSG), 878–950 (RQEQ…HCER), 967–991 (APQD…QRAV), 1021–1042 (SLGH…KQGL), 1074–1105 (PQVL…KGDC), and 1207–1226 (PEAC…DLSH). A compositionally biased stretch (polar residues) spans 884–904 (HGTASAGPTLSNRKNSKNDSS). Composition is skewed to basic and acidic residues over residues 910 to 932 (PKWK…EPSK), 976 to 987 (SRSKKQEGDLKK), and 1033 to 1042 (PSKEGEKQGL). Serine 1217 bears the Phosphoserine mark. Threonine 1422 is subject to Phosphothreonine.

It belongs to the protein-tyrosine phosphatase family. In terms of assembly, interacts with filamentous actin. As to expression, expressed in brain, heart, liver, skeletal muscle, testis and thymus. Also expressed at lower levels in kidney, small intestine and spleen. Within testicular seminiferous tubules expressed in germ cells and spermatocytes, where it has a cytoplasmic localization, and round spermatids, where it concentrates in the acrosomal region next to the nucleus.

The protein localises to the cytoplasm. The protein resides in the cytoskeleton. It localises to the cell junction. Its subcellular location is the focal adhesion. It is found in the cytoplasmic vesicle. The protein localises to the secretory vesicle. The protein resides in the acrosome. The catalysed reaction is O-phospho-L-tyrosyl-[protein] + H2O = L-tyrosyl-[protein] + phosphate. It carries out the reaction O-phospho-L-seryl-[protein] + H2O = L-seryl-[protein] + phosphate. It catalyses the reaction O-phospho-L-threonyl-[protein] + H2O = L-threonyl-[protein] + phosphate. Functionally, protein phosphatase which regulates actin filament dynamics. Dephosphorylates and activates the actin binding/depolymerizing factor cofilin, which subsequently binds to actin filaments and stimulates their disassembly. Inhibitory phosphorylation of cofilin is mediated by LIMK1, which may also be dephosphorylated and inactivated by this protein. Required for spermatogenesis. Involved in acrosome biogenesis, probably by regulating cofilin-mediated actin cytoskeleton remodeling during proacrosomal vesicle fusion and/or Golgi to perinuclear vesicle trafficking. This chain is Protein phosphatase Slingshot homolog 2 (Ssh2), found in Mus musculus (Mouse).